A 317-amino-acid chain; its full sequence is Apolipoprotein E (317 aa).

An N-terminal signal peptide occupies residues 1–18 (MKVLWAALLVTFLAGCQA). 8 repeat units span residues 80–101 (TLMDETMKELKAYKSELEEQLS), 102–123 (PVAEETRARLSKELQAAQARLG), 124–145 (ADMEDVRSRLVQYRGEVQAMLG), 146–167 (QSTEELRARLASHLRKLRKRLL), 168–189 (RDADDLQKRLAVYQAGAREGAE), 190–211 (RGVSAIRERLGPLVEQGRVRAA), 212–233 (TVGSLAGQPLQERAQAWGERLR), and 234–255 (ARMEEVGSRTRDRLDEVKEQVA). The 8 X 22 AA approximate tandem repeats stretch occupies residues 80 to 255 (TLMDETMKEL…RLDEVKEQVA (176 aa)). Met143 carries the post-translational modification Methionine sulfoxide. Ser147 is subject to Phosphoserine. Residues 158 to 168 (HLRKLRKRLLR) are LDL and other lipoprotein receptors binding. Heparin is bound at residue 162 to 165 (LRKR). The segment at 210–290 (AATVGSLAGQ…SWFEPLVEDM (81 aa)) is lipid-binding and lipoprotein association. O-linked (GalNAc...) threonine glycosylation occurs at Thr212. Position 229–236 (229–236 (GERLRARM)) interacts with heparin. Positions 266-317 (QQISLQAEAFQARLKSWFEPLVEDMQRQWAGLVEKVQAAVGASTAPVPSDNH) are homooligomerization. Positions 278–290 (RLKSWFEPLVEDM) are specificity for association with VLDL.

This sequence belongs to the apolipoprotein A1/A4/E family. In terms of assembly, homotetramer. May interact with ABCA1; functionally associated with ABCA1 in the biogenesis of HDLs. May interact with APP/A4 amyloid-beta peptide; the interaction is extremely stable in vitro but its physiological significance is unclear. May interact with MAPT. May interact with MAP2. In the cerebrospinal fluid, interacts with secreted SORL1. Interacts with PMEL; this allows the loading of PMEL luminal fragment on ILVs to induce fibril nucleation. APOE exists as multiple glycosylated and sialylated glycoforms within cells and in plasma. The extent of glycosylation and sialylation are tissue and context specific. Post-translationally, glycated in plasma VLDL. In terms of processing, phosphorylated by FAM20C in the extracellular medium.

It localises to the secreted. The protein localises to the extracellular space. The protein resides in the extracellular matrix. It is found in the extracellular vesicle. Its subcellular location is the endosome. It localises to the multivesicular body. Its function is as follows. APOE is an apolipoprotein, a protein associating with lipid particles, that mainly functions in lipoprotein-mediated lipid transport between organs via the plasma and interstitial fluids. APOE is a core component of plasma lipoproteins and is involved in their production, conversion and clearance. Apolipoproteins are amphipathic molecules that interact both with lipids of the lipoprotein particle core and the aqueous environment of the plasma. As such, APOE associates with chylomicrons, chylomicron remnants, very low density lipoproteins (VLDL) and intermediate density lipoproteins (IDL) but shows a preferential binding to high-density lipoproteins (HDL). It also binds a wide range of cellular receptors including the LDL receptor/LDLR, the LDL receptor-related proteins LRP1, LRP2 and LRP8 and the very low-density lipoprotein receptor/VLDLR that mediate the cellular uptake of the APOE-containing lipoprotein particles. Finally, APOE also has a heparin-binding activity and binds heparan-sulfate proteoglycans on the surface of cells, a property that supports the capture and the receptor-mediated uptake of APOE-containing lipoproteins by cells. A main function of APOE is to mediate lipoprotein clearance through the uptake of chylomicrons, VLDLs, and HDLs by hepatocytes. APOE is also involved in the biosynthesis by the liver of VLDLs as well as their uptake by peripheral tissues ensuring the delivery of triglycerides and energy storage in muscle, heart and adipose tissues. By participating in the lipoprotein-mediated distribution of lipids among tissues, APOE plays a critical role in plasma and tissues lipid homeostasis. APOE is also involved in two steps of reverse cholesterol transport, the HDLs-mediated transport of cholesterol from peripheral tissues to the liver, and thereby plays an important role in cholesterol homeostasis. First, it is functionally associated with ABCA1 in the biogenesis of HDLs in tissues. Second, it is enriched in circulating HDLs and mediates their uptake by hepatocytes. APOE also plays an important role in lipid transport in the central nervous system, regulating neuron survival and sprouting. This is Apolipoprotein E (APOE) from Rhinopithecus roxellana (Golden snub-nosed monkey).